The primary structure comprises 139 residues: Translation initiation factor 2 subunit beta (139 aa).

The protein belongs to the eIF-2-beta/eIF-5 family. In terms of assembly, heterotrimer composed of an alpha, a beta and a gamma chain.

Its function is as follows. eIF-2 functions in the early steps of protein synthesis by forming a ternary complex with GTP and initiator tRNA. This chain is Translation initiation factor 2 subunit beta, found in Saccharolobus islandicus (strain Y.N.15.51 / Yellowstone #2) (Sulfolobus islandicus).